A 110-amino-acid chain; its full sequence is Thiosulfate sulfurtransferase GlpE (110 aa).

The 89-residue stretch at 19-107 folds into the Rhodanese domain; it reads EDSLAVLVDI…WRRQALPIIQ (89 aa). C67 functions as the Cysteine persulfide intermediate in the catalytic mechanism.

Belongs to the GlpE family.

Its subcellular location is the cytoplasm. The enzyme catalyses thiosulfate + hydrogen cyanide = thiocyanate + sulfite + 2 H(+). It catalyses the reaction thiosulfate + [thioredoxin]-dithiol = [thioredoxin]-disulfide + hydrogen sulfide + sulfite + 2 H(+). Its function is as follows. Transferase that catalyzes the transfer of sulfur from thiosulfate to thiophilic acceptors such as cyanide or dithiols. May function in a CysM-independent thiosulfate assimilation pathway by catalyzing the conversion of thiosulfate to sulfite, which can then be used for L-cysteine biosynthesis. The sequence is that of Thiosulfate sulfurtransferase GlpE from Photobacterium profundum (strain SS9).